The sequence spans 216 residues: Octanoyltransferase (216 aa).

Residues 35-213 (NSNPDFIWIG…TIEEEFNFDF (179 aa)) enclose the BPL/LPL catalytic domain. Residues 77-84 (RGGEVTCH), 144-146 (SIG), and 157-159 (GFS) each bind substrate. Cys-175 functions as the Acyl-thioester intermediate in the catalytic mechanism.

It belongs to the LipB family.

The protein localises to the cytoplasm. It carries out the reaction octanoyl-[ACP] + L-lysyl-[protein] = N(6)-octanoyl-L-lysyl-[protein] + holo-[ACP] + H(+). It participates in protein modification; protein lipoylation via endogenous pathway; protein N(6)-(lipoyl)lysine from octanoyl-[acyl-carrier-protein]: step 1/2. Its function is as follows. Catalyzes the transfer of endogenously produced octanoic acid from octanoyl-acyl-carrier-protein onto the lipoyl domains of lipoate-dependent enzymes. Lipoyl-ACP can also act as a substrate although octanoyl-ACP is likely to be the physiological substrate. In Prochlorococcus marinus (strain MIT 9301), this protein is Octanoyltransferase.